A 543-amino-acid chain; its full sequence is Vibriobactin-specific 2,3-dihydroxybenzoate-AMP ligase (543 aa).

A helical membrane pass occupies residues 240-259 (FPLSSPGALGVFWAGGCVVL).

This sequence belongs to the ATP-dependent AMP-binding enzyme family.

Its subcellular location is the cell inner membrane. The catalysed reaction is 2,3-dihydroxybenzoate + holo-[ACP] + ATP = 2,3-dihydroxybenzoyl-[ACP] + AMP + diphosphate. It functions in the pathway siderophore biosynthesis; vibriobactin biosynthesis. In terms of biological role, activation of the carboxylate group of 2,3-dihydroxy-benzoate (DHB), via ATP-dependent PPi exchange reactions, to the acyladenylate, preparing that molecule for the final stages of vibriobactin synthesis. The sequence is that of Vibriobactin-specific 2,3-dihydroxybenzoate-AMP ligase (vibE) from Vibrio cholerae serotype O1 (strain ATCC 39315 / El Tor Inaba N16961).